A 76-amino-acid polypeptide reads, in one-letter code: Sec-independent protein translocase protein TatA (76 aa).

The chain crosses the membrane as a helical span at residues 1–21 (MGGISITQLLIIVAIVVLLFG). Residues 45-76 (DDNKEKDAEFKSLSDDSETTAKTEKAKDKEQA) are disordered.

Belongs to the TatA/E family. The Tat system comprises two distinct complexes: a TatABC complex, containing multiple copies of TatA, TatB and TatC subunits, and a separate TatA complex, containing only TatA subunits. Substrates initially bind to the TatABC complex, which probably triggers association of the separate TatA complex to form the active translocon.

The protein localises to the cell inner membrane. Its function is as follows. Part of the twin-arginine translocation (Tat) system that transports large folded proteins containing a characteristic twin-arginine motif in their signal peptide across membranes. TatA could form the protein-conducting channel of the Tat system. In Pasteurella multocida (strain Pm70), this protein is Sec-independent protein translocase protein TatA.